A 665-amino-acid chain; its full sequence is MISRLIHSKHYLTLFRQNSSIAIPLLYSLELRCRSCGIKVQDKNKDEPGYYIKPVKLLNDSKTFSEQTQKLGLVVAADAPNILQNPIKKRPLDEAYDKLISKMSQSDKDLLINDFTLFGQPKYKDSKELETIPKNDKGETVKEVVNKIYTVKPDETSVECMRCRNIQYQSSYKMTDENFPISEMEQVLQNLPRASTAPLVYLFNANDFPMGINPNIFKFRNPKDIYFIMTKTDNLVADIKNKFNKSAILHEYTKNFVSDYLGIKYGVPKQNIFLSSSLKGWKLDELHRFIPDGSYIIGNTNCGKSTMIKSLMLNEELQNKKEQVRHVPFNTVSKIKDKFKQQFYQKVGPGVSYLPGFTRDIIPLNIGLKTVYDVPGFSSSPKIHYLYESIKEPKIIHRLIKGEKTFAKGYNGAQYKSFKGPQVLCFEGLGYLQLPKDCLFQIRNVTNFKIHAFSNIDKAAKLAQNIPPSLANDFAIGNHSLFSQFDKYLVPPFYGSIELVFENFGYIHIKPIGAKQSNELMKLYLYPGLQSIIRQPIINYITKTPTGFDKYGNALMKYDPVYKSEFALKRFRGGEEYQPLFSRLIPCVEDIEKFVGGGGGGAVAAAGAAAGAAETNIVDGNDAQGLAQSLRSQEYLQLNQFLKRRAKYDESYYMDASNKYDFWVE.

The N-terminal 17 residues, 1-17 (MISRLIHSKHYLTLFRQ), are a transit peptide targeting the mitochondrion. A CP-type G domain is found at 185-380 (EQVLQNLPRA…VYDVPGFSSS (196 aa)).

Belongs to the TRAFAC class YlqF/YawG GTPase family. GEP3 subfamily.

The protein localises to the mitochondrion. In terms of biological role, may be involved in the mitochondrial lipid metabolism. This is Genetic interactor of prohibitins 3, mitochondrial (GEP3) from Lodderomyces elongisporus (strain ATCC 11503 / CBS 2605 / JCM 1781 / NBRC 1676 / NRRL YB-4239) (Yeast).